Here is a 732-residue protein sequence, read N- to C-terminus: Cyclopenase asqI (732 aa).

Residues His-168, His-172, and His-200 each contribute to the Zn(2+) site.

Belongs to the tyrosinase family. Zn(2+) is required as a cofactor.

It catalyses the reaction (-)-cyclopenine = viridicatin + methyl isocyanate + H(+). It carries out the reaction (-)-4'-methoxycyclopenine = 4'-methoxyviridicatin + methyl isocyanate + H(+). It functions in the pathway secondary metabolite biosynthesis. It participates in alkaloid biosynthesis. The protein operates within mycotoxin biosynthesis. In terms of biological role, cyclopenase; part of the gene cluster that mediates the biosynthesis of the aspoquinolone mycotoxins. Within the pathway, the cyclopenase asqI catalyzes the conversion of 4'-methoxycyclopenin into 4'-methoxyviridicatin. Cyclopenin can also be converted into viridicatin by asqI. The first step of the pathway is catalyzed by the nonribosomal peptide synthetase asqK that condenses anthranilic acid and O-methyl-L-tyrosine to produce 4'-methoxycyclopeptin. 4'-methoxycyclopeptin is then converted to 4'-methoxydehydrocyclopeptin by the ketoglutarate-dependent dioxygenase asqJ. AsqJ also converts its first product 4'-methoxydehydrocyclopeptin to 4'-methoxycyclopenin. The following conversion of 4'-methoxycyclopenin into 4'-methoxyviridicatin is catalyzed by the cyclopenase asqI. 4'-methoxyviridicatin is the precursor of quinolone natural products, and is further converted to quinolinone B. The prenyltransferase asqH1 then catalyzes the canonical Friedel-Crafts alkylation of quinolinone B with dimethylallyl cation to yield dimethylallyl quinolone, which is subjected to FAD-dependent dehydrogenation by the FAD-linked oxidoreductase asqF to yield conjugated aryl diene. The delta(3') double bond then serves as the site of the second alkylation with DMAPP catalyzed by the prenyltransferase asqH2 to yield a carbenium ion intermediate, which can be attacked by H(2)O to yield a styrenyl quinolone containing a C3'-hydroxyprenyl chain. The FAD-dependent monooxygenase asqG performs epoxidation of the terminal C7'-C8' olefin. Finally, after dehydratation of the epoxide at C3 by asqC, the quinolone epoxide rearrangement protein asqO catalyzes an enzymatic 3-exo-tet cyclization to yield the cyclopropyl-THF ring system in aspoquinolone. The protein is Cyclopenase asqI of Emericella nidulans (strain FGSC A4 / ATCC 38163 / CBS 112.46 / NRRL 194 / M139) (Aspergillus nidulans).